A 229-amino-acid chain; its full sequence is NAD(P)H-hydrate epimerase (229 aa).

The YjeF N-terminal domain occupies 11 to 222; that stretch reads YAAADIRAAE…DVGLDLSGAT (212 aa). 59-63 contacts (6S)-NADPHX; it reads NNGGD. Positions 60 and 124 each coordinate K(+). (6S)-NADPHX is bound by residues 128-136 and Asp164; that span reads GIGTTASPA. Ser167 provides a ligand contact to K(+).

This sequence belongs to the NnrE/AIBP family. K(+) serves as cofactor.

It catalyses the reaction (6R)-NADHX = (6S)-NADHX. The enzyme catalyses (6R)-NADPHX = (6S)-NADPHX. Functionally, catalyzes the epimerization of the S- and R-forms of NAD(P)HX, a damaged form of NAD(P)H that is a result of enzymatic or heat-dependent hydration. This is a prerequisite for the S-specific NAD(P)H-hydrate dehydratase to allow the repair of both epimers of NAD(P)HX. The chain is NAD(P)H-hydrate epimerase from Clavibacter sepedonicus (Clavibacter michiganensis subsp. sepedonicus).